Consider the following 281-residue polypeptide: Bifunctional protein FolD (281 aa).

Residues 164–166 (GRS), Ser-189, and Thr-230 contribute to the NADP(+) site.

Belongs to the tetrahydrofolate dehydrogenase/cyclohydrolase family. As to quaternary structure, homodimer.

The enzyme catalyses (6R)-5,10-methylene-5,6,7,8-tetrahydrofolate + NADP(+) = (6R)-5,10-methenyltetrahydrofolate + NADPH. It carries out the reaction (6R)-5,10-methenyltetrahydrofolate + H2O = (6R)-10-formyltetrahydrofolate + H(+). The protein operates within one-carbon metabolism; tetrahydrofolate interconversion. Its function is as follows. Catalyzes the oxidation of 5,10-methylenetetrahydrofolate to 5,10-methenyltetrahydrofolate and then the hydrolysis of 5,10-methenyltetrahydrofolate to 10-formyltetrahydrofolate. In Dictyoglomus turgidum (strain DSM 6724 / Z-1310), this protein is Bifunctional protein FolD.